A 258-amino-acid polypeptide reads, in one-letter code: Ribosome maturation factor RimP (258 aa).

Disordered stretches follow at residues 48–88 (PQRP…PTSA) and 212–258 (IFKK…AEND). The span at 215–224 (KPQKPGKKPG) shows a compositional bias: basic residues.

This sequence belongs to the RimP family.

It is found in the cytoplasm. Its function is as follows. Required for maturation of 30S ribosomal subunits. The polypeptide is Ribosome maturation factor RimP (Desulfovibrio desulfuricans (strain ATCC 27774 / DSM 6949 / MB)).